Reading from the N-terminus, the 771-residue chain is Assimilatory nitrate reductase electron transfer subunit (771 aa).

Tyr43–Gly79 is a binding site for FAD. Residues Cys414, Cys416, Cys449, and Cys452 each coordinate [2Fe-2S] cluster.

FAD serves as cofactor. Requires [2Fe-2S] cluster as cofactor.

Required for nitrate assimilation. In Bacillus subtilis (strain 168), this protein is Assimilatory nitrate reductase electron transfer subunit (nasB).